The primary structure comprises 35 residues: Fatty acid synthase (35 aa).

Serine 12 is an active-site residue.

As to quaternary structure, homodimer which is arranged in a head to tail fashion. Interacts with CEACAM1; this interaction is insulin and phosphorylation-dependent; reduces fatty-acid synthase activity.

The protein resides in the cytoplasm. It localises to the melanosome. The catalysed reaction is acetyl-CoA + n malonyl-CoA + 2n NADPH + 2n H(+) = a long-chain fatty acid + (n+1) CoA + n CO2 + 2n NADP(+).. Fatty acid synthetase catalyzes the formation of long-chain fatty acids from acetyl-CoA, malonyl-CoA and NADPH. This multifunctional protein has 7 catalytic activities as an acyl carrier protein. In terms of biological role, this fragment is from the acyltransferase domain of the fatty acid synthetase. The polypeptide is Fatty acid synthase (FASN) (Capra hircus (Goat)).